We begin with the raw amino-acid sequence, 254 residues long: 5'-nucleotidase SurE (254 aa).

Positions 8, 9, 38, and 91 each coordinate a divalent metal cation.

It belongs to the SurE nucleotidase family. A divalent metal cation serves as cofactor.

It localises to the cytoplasm. The catalysed reaction is a ribonucleoside 5'-phosphate + H2O = a ribonucleoside + phosphate. In terms of biological role, nucleotidase that shows phosphatase activity on nucleoside 5'-monophosphates. The chain is 5'-nucleotidase SurE from Anaeromyxobacter sp. (strain K).